The primary structure comprises 259 residues: ATP synthase subunit a (259 aa).

5 helical membrane passes run 29–49 (TVNI…IWIF), 90–110 (IAPL…MDLI), 134–154 (DVNI…IYSI), 208–228 (LVFI…LSVP), and 230–250 (ALFH…LTIV).

Belongs to the ATPase A chain family. F-type ATPases have 2 components, CF(1) - the catalytic core - and CF(0) - the membrane proton channel. CF(1) has five subunits: alpha(3), beta(3), gamma(1), delta(1), epsilon(1). CF(0) has three main subunits: a(1), b(2) and c(9-12). The alpha and beta chains form an alternating ring which encloses part of the gamma chain. CF(1) is attached to CF(0) by a central stalk formed by the gamma and epsilon chains, while a peripheral stalk is formed by the delta and b chains.

Its subcellular location is the cell inner membrane. In terms of biological role, key component of the proton channel; it plays a direct role in the translocation of protons across the membrane. The polypeptide is ATP synthase subunit a (Aeromonas salmonicida (strain A449)).